Here is a 323-residue protein sequence, read N- to C-terminus: MKLHNVLKNNNNNKEDVGPSIEQFGGNAEWFNTTKVLSECLPYIQQFSGETFVIKYGGAAMTDRKLAESFAHDIVLLKQLGINPIVVHGGGNKINSFLEKINKKSTFINGLRVTDAETLEVVEMVLCGLVNKDITQLINKAGGNAIGLCGKDANLIEAKKVCYTYKENQSNNVEKILDMGFVGEPHEVNTDLLFFIEESDFIPVIAPVCSGENNITYNVNADLVAGALANALAAAKLIILTNVSGVTDANGNLLSEISVSDAENLIEQGVANSGMIPKLQTCIKVVKEGYGSAHIIDGRIPHVLLLELFTVHGTGTMVLGNDI.

Residues 90–91 (GG), Arg112, and Asn218 each bind substrate.

The protein belongs to the acetylglutamate kinase family. ArgB subfamily.

Its subcellular location is the cytoplasm. It catalyses the reaction N-acetyl-L-glutamate + ATP = N-acetyl-L-glutamyl 5-phosphate + ADP. Its pathway is amino-acid biosynthesis; L-arginine biosynthesis; N(2)-acetyl-L-ornithine from L-glutamate: step 2/4. Functionally, catalyzes the ATP-dependent phosphorylation of N-acetyl-L-glutamate. The polypeptide is Acetylglutamate kinase (Ehrlichia canis (strain Jake)).